Here is a 438-residue protein sequence, read N- to C-terminus: Envelope glycoprotein M (438 aa).

Over 1-13 (MAGSAQPAAVHWR) the chain is Intravirion. Residues 14 to 34 (LWLAQVGVFAGLALLLLITLI) form a helical membrane-spanning segment. Topologically, residues 35–88 (GAASPGAGLPCFYAAIVNYNARNLSADGGAWAQRELGARHPALFLETPTTAAFS) are virion surface. A helical transmembrane segment spans residues 89–109 (AYTAVVLLAVAAFDVAAAIII). Residues 110–132 (RRENSGGFAAAYHMNALATLATP) lie on the Intravirion side of the membrane. The helical transmembrane segment at 133 to 153 (PGALLLGALAAWTLQAAVLLL) threads the bilayer. Residues 154–158 (SHKIM) lie on the Virion surface side of the membrane. A helical membrane pass occupies residues 159-179 (VLAAATYLAHLAPPAAFVGLF). The Intravirion segment spans residues 180 to 212 (CTAGLPGAEYAQAVHALRERSPRAHRLLGPGRA). Residues 213–233 (VMINLAGGLLALIIGTAPLML) traverse the membrane as a helical segment. Residues 234-248 (GQLLGAGLGLSLAQT) lie on the Virion surface side of the membrane. A helical membrane pass occupies residues 249–269 (VVAGVTVFCLAAVLFLVLTEL). Topologically, residues 270 to 276 (VLSRYTQ) are intravirion. A helical membrane pass occupies residues 277–297 (VLPGPAFGTLVAASCIAVASH). The Virion surface segment spans residues 298-317 (DYFHQLRGVVRTQAPRAAAR). Residues 318–338 (VKLALAGVALLAVAMLVLRLV) traverse the membrane as a helical segment. Over 339–438 (RACLHHRRKG…PRSPPPAHVK (100 aa)) the chain is Intravirion. The interval 395 to 438 (EEAVYEAHAPPRPPTIPLRRPEVPHSRASHPRPPPRSPPPAHVK) is disordered. Pro residues predominate over residues 425-438 (PRPPPRSPPPAHVK).

Belongs to the herpesviridae glycoprotein M family. In terms of assembly, interacts (via N-terminus) with gN (via N-terminus). The gM-gN heterodimer forms the gCII complex. In terms of processing, N-glycosylated. It is not O-glycosylated.

It is found in the virion membrane. It localises to the host Golgi apparatus. The protein localises to the host trans-Golgi network. Its subcellular location is the host endosome membrane. The protein resides in the host nucleus inner membrane. Functionally, envelope glycoprotein important for virion assembly and egress. Plays a role in the correct incorporation of gH-gL into virion membrane. Directs the glycoprotein N (gN) to the host trans-Golgi network. The protein is Envelope glycoprotein M of Bovine herpesvirus 1.1 (strain Cooper) (BoHV-1).